The sequence spans 515 residues: 1-pyrroline-5-carboxylate dehydrogenase 2 (515 aa).

Residues glutamate 286 and cysteine 320 contribute to the active site.

Belongs to the aldehyde dehydrogenase family. RocA subfamily.

The catalysed reaction is L-glutamate 5-semialdehyde + NAD(+) + H2O = L-glutamate + NADH + 2 H(+). Its pathway is amino-acid degradation; L-proline degradation into L-glutamate; L-glutamate from L-proline: step 2/2. Its function is as follows. Important for the use of proline as a sole carbon and energy source or a sole nitrogen source. The protein is 1-pyrroline-5-carboxylate dehydrogenase 2 of Bacillus subtilis (strain 168).